We begin with the raw amino-acid sequence, 222 residues long: ATP-dependent dethiobiotin synthetase BioD (222 aa).

12–17 (DVGKTI) serves as a coordination point for ATP. Thr16 contributes to the Mg(2+) binding site. Residue Lys37 is part of the active site. Residue Thr41 coordinates substrate. Residues Asp49, 107–110 (EGAG), 167–168 (GS), and 197–199 (AEG) contribute to the ATP site. Residues Asp49 and Glu107 each coordinate Mg(2+).

Belongs to the dethiobiotin synthetase family. In terms of assembly, homodimer. Mg(2+) is required as a cofactor.

It is found in the cytoplasm. The catalysed reaction is (7R,8S)-7,8-diammoniononanoate + CO2 + ATP = (4R,5S)-dethiobiotin + ADP + phosphate + 3 H(+). It participates in cofactor biosynthesis; biotin biosynthesis; biotin from 7,8-diaminononanoate: step 1/2. Its function is as follows. Catalyzes a mechanistically unusual reaction, the ATP-dependent insertion of CO2 between the N7 and N8 nitrogen atoms of 7,8-diaminopelargonic acid (DAPA, also called 7,8-diammoniononanoate) to form a ureido ring. This Corynebacterium diphtheriae (strain ATCC 700971 / NCTC 13129 / Biotype gravis) protein is ATP-dependent dethiobiotin synthetase BioD.